The chain runs to 476 residues: Ribulose bisphosphate carboxylase large chain (476 aa).

The propeptide occupies 1–2; that stretch reads MS. At Pro-3 the chain carries N-acetylproline. Lys-14 is modified (N6,N6,N6-trimethyllysine). Substrate-binding residues include Asn-123 and Thr-173. The active-site Proton acceptor is the Lys-175. Position 177 (Lys-177) interacts with substrate. Mg(2+) contacts are provided by Lys-201, Asp-203, and Glu-204. Residue Lys-201 is modified to N6-carboxylysine. The active-site Proton acceptor is the His-294. Positions 295, 327, and 379 each coordinate substrate.

The protein belongs to the RuBisCO large chain family. Type I subfamily. In terms of assembly, heterohexadecamer of 8 large chains and 8 small chains; disulfide-linked. The disulfide link is formed within the large subunit homodimers. Requires Mg(2+) as cofactor. In terms of processing, the disulfide bond which can form in the large chain dimeric partners within the hexadecamer appears to be associated with oxidative stress and protein turnover.

The protein localises to the plastid. Its subcellular location is the chloroplast. The catalysed reaction is 2 (2R)-3-phosphoglycerate + 2 H(+) = D-ribulose 1,5-bisphosphate + CO2 + H2O. It carries out the reaction D-ribulose 1,5-bisphosphate + O2 = 2-phosphoglycolate + (2R)-3-phosphoglycerate + 2 H(+). Its function is as follows. RuBisCO catalyzes two reactions: the carboxylation of D-ribulose 1,5-bisphosphate, the primary event in carbon dioxide fixation, as well as the oxidative fragmentation of the pentose substrate in the photorespiration process. Both reactions occur simultaneously and in competition at the same active site. This chain is Ribulose bisphosphate carboxylase large chain, found in Zea mays (Maize).